The sequence spans 222 residues: Small ribosomal subunit protein uS3 (222 aa).

The 69-residue stretch at Val39–Arg107 folds into the KH type-2 domain.

This sequence belongs to the universal ribosomal protein uS3 family. In terms of assembly, part of the 30S ribosomal subunit. Forms a tight complex with proteins S10 and S14.

Its function is as follows. Binds the lower part of the 30S subunit head. Binds mRNA in the 70S ribosome, positioning it for translation. The sequence is that of Small ribosomal subunit protein uS3 from Francisella tularensis subsp. tularensis (strain FSC 198).